Consider the following 259-residue polypeptide: Hydroxyethylthiazole kinase (259 aa).

Met37 contacts substrate. The ATP site is built by Arg113 and Thr158. Gly185 is a binding site for substrate.

The protein belongs to the Thz kinase family. Mg(2+) serves as cofactor.

The enzyme catalyses 5-(2-hydroxyethyl)-4-methylthiazole + ATP = 4-methyl-5-(2-phosphooxyethyl)-thiazole + ADP + H(+). It participates in cofactor biosynthesis; thiamine diphosphate biosynthesis; 4-methyl-5-(2-phosphoethyl)-thiazole from 5-(2-hydroxyethyl)-4-methylthiazole: step 1/1. Catalyzes the phosphorylation of the hydroxyl group of 4-methyl-5-beta-hydroxyethylthiazole (THZ). This chain is Hydroxyethylthiazole kinase, found in Helicobacter pylori (strain ATCC 700392 / 26695) (Campylobacter pylori).